Reading from the N-terminus, the 370-residue chain is Cobalt-precorrin-5B C(1)-methyltransferase (370 aa).

This sequence belongs to the CbiD family.

The catalysed reaction is Co-precorrin-5B + S-adenosyl-L-methionine = Co-precorrin-6A + S-adenosyl-L-homocysteine. It functions in the pathway cofactor biosynthesis; adenosylcobalamin biosynthesis; cob(II)yrinate a,c-diamide from sirohydrochlorin (anaerobic route): step 6/10. Functionally, catalyzes the methylation of C-1 in cobalt-precorrin-5B to form cobalt-precorrin-6A. This is Cobalt-precorrin-5B C(1)-methyltransferase from Nostoc sp. (strain PCC 7120 / SAG 25.82 / UTEX 2576).